Reading from the N-terminus, the 297-residue chain is MDVVRTPDARFQNLVGYPFAAHYVDVAATDTPHLRMHYIDEGPADGPPIVLLHGEPTWSYLYRTMIPPLAAGGYRVLAPDLIGFGRSDKPTRIADYTYLRHVEWVKSWFEELRLAEATLFVQDWGSLIGLRVAAEHGDAIARLVVANGFLPTARGRTPTAFHIWRAFARYSPVLPAGRLVAAGTVRKVPPAVRAGYDAPFPDKSYQAGARAFPQLVPISPDDPAVAANRAAWDALGRWEKPFLAIFGERDPLLGRADRPLIKHIPGAAGQPHARINANHFIQEDSGPELAERIISWQ.

One can recognise an AB hydrolase-1 domain in the interval 47-148; that stretch reads PPIVLLHGEP…AIARLVVANG (102 aa). Asp123 acts as the Nucleophile in catalysis. Catalysis depends on Asp250, which acts as the Proton donor. His279 functions as the Proton acceptor in the catalytic mechanism.

It belongs to the haloalkane dehalogenase family. Type 1 subfamily. As to quaternary structure, monomer.

The catalysed reaction is 1-haloalkane + H2O = a halide anion + a primary alcohol + H(+). Functionally, catalyzes hydrolytic cleavage of carbon-halogen bonds in halogenated aliphatic compounds, leading to the formation of the corresponding primary alcohols, halide ions and protons. This chain is Haloalkane dehalogenase, found in Mycobacterium marinum (strain ATCC BAA-535 / M).